A 96-amino-acid polypeptide reads, in one-letter code: Small ribosomal subunit protein bS6 (96 aa).

The protein belongs to the bacterial ribosomal protein bS6 family.

Its function is as follows. Binds together with bS18 to 16S ribosomal RNA. The protein is Small ribosomal subunit protein bS6 of Bacillus cereus (strain ATCC 10987 / NRS 248).